The primary structure comprises 375 residues: Glutamate 5-kinase (375 aa).

Lysine 3 lines the ATP pocket. Substrate-binding residues include serine 44, aspartate 131, and asparagine 143. ATP contacts are provided by residues 163 to 164 (SD) and 205 to 211 (TGGMVTK). Positions 269-346 (EGTLWVDDGA…GDIEALLGYR (78 aa)) constitute a PUA domain.

Belongs to the glutamate 5-kinase family.

Its subcellular location is the cytoplasm. It catalyses the reaction L-glutamate + ATP = L-glutamyl 5-phosphate + ADP. Its pathway is amino-acid biosynthesis; L-proline biosynthesis; L-glutamate 5-semialdehyde from L-glutamate: step 1/2. Catalyzes the transfer of a phosphate group to glutamate to form L-glutamate 5-phosphate. This is Glutamate 5-kinase from Rhodospirillum rubrum (strain ATCC 11170 / ATH 1.1.1 / DSM 467 / LMG 4362 / NCIMB 8255 / S1).